A 359-amino-acid chain; its full sequence is Ribosomal RNA large subunit methyltransferase M (359 aa).

Residues S186, 219 to 222 (CPGG), D238, D258, and D275 contribute to the S-adenosyl-L-methionine site. Residue K304 is the Proton acceptor of the active site.

It belongs to the class I-like SAM-binding methyltransferase superfamily. RNA methyltransferase RlmE family. RlmM subfamily. Monomer.

It localises to the cytoplasm. The catalysed reaction is cytidine(2498) in 23S rRNA + S-adenosyl-L-methionine = 2'-O-methylcytidine(2498) in 23S rRNA + S-adenosyl-L-homocysteine + H(+). In terms of biological role, catalyzes the 2'-O-methylation at nucleotide C2498 in 23S rRNA. The protein is Ribosomal RNA large subunit methyltransferase M of Vibrio vulnificus (strain YJ016).